The primary structure comprises 516 residues: MAATNIWAALPAKKRPLHQRARRPAGGRGREPEVPFTTDPSGNPAGRNCLEFLPPGGTSGCSATDGGATVPLALRPFLRERRPLGSQHPCPWHYLQVSDYDDSLAPTCFRAHLHRRGSSSTLNQASAMTDPNPRTAEASGLYTYSSRPRAVACQRRRHRDSILQPVEEPMSYGNIMYDRRVIRGNTYALPTGQVPGQPDPLELQRQQQARRRALARKRAQEQLKPRTPEPVEGRKHVDIQTELYLEEIADRIVEVDMECQTDAFLDRPPTPLFIPAKTGKDVATQILGGELFDFDLEVKPMLEVLVGKTIEQSLLEVMEEEELANLRARQYAYEEIRNVELAEVQRLEEQERRHREEKERRKKQQWEIVHKRNETLQKISALIFARQYLANLLPSVFDKLRNSGFFYDPIERDIEVGFLPWLMNEVEKSMEHSMVGRTVLDMLIRDVVERRINDYEHKEAMPPGQKTNVINGPNTVTDPSVTTLHTQKPVLDRVSSQPAPSQERKPVEEGGHLMAE.

Disordered regions lie at residues 1–45 (MAAT…GNPA), 120–139 (STLN…AEAS), and 190–233 (PTGQ…PVEG). Over residues 12-25 (AKKRPLHQRARRPA) the composition is skewed to basic residues. The segment covering 120-129 (STLNQASAMT) has biased composition (polar residues). Basic residues predominate over residues 208–217 (QARRRALARK). Residues 218-233 (RAQEQLKPRTPEPVEG) are compositionally biased toward basic and acidic residues. A Phosphothreonine; by MAPK1 modification is found at Thr270. The stretch at 333–369 (YEEIRNVELAEVQRLEEQERRHREEKERRKKQQWEIV) forms a coiled coil. The interval 459–516 (EAMPPGQKTNVINGPNTVTDPSVTTLHTQKPVLDRVSSQPAPSQERKPVEEGGHLMAE) is disordered. Residues 465 to 486 (QKTNVINGPNTVTDPSVTTLHT) show a composition bias toward polar residues. Residues 502–516 (QERKPVEEGGHLMAE) show a composition bias toward basic and acidic residues.

It belongs to the flagellar radial spoke RSP3 family. May be a component of axonemal radial spokes. Interacts with IQUB. Interacts with phosphorylated MAPK1. Interacts with MEK1. Interacts with PKA regulatory subunits PRKAR1A and PRKAR1B. Interacts with RSPH1. Interacts with RSPH4A. Interacts with RSPH6A. Interacts with RSPH9. Interacts with CFAP61. Interacts with LRRC23.

Its subcellular location is the cytoplasm. It is found in the cytoskeleton. The protein localises to the cilium axoneme. The protein resides in the flagellum axoneme. In terms of biological role, may function as part of axonemal radial spoke complexes that play an important part in the motility of sperm and cilia. Functions as a protein kinase A-anchoring protein that scaffolds the cAMP-dependent protein kinase holoenzyme. May serve as a point of convergence for MAPK and PKA signaling in cilia. The sequence is that of Radial spoke head protein 3 homolog A (Rsph3a) from Mus musculus (Mouse).